Reading from the N-terminus, the 145-residue chain is Endoribonuclease YbeY (145 aa).

3 residues coordinate Zn(2+): histidine 109, histidine 113, and histidine 119.

The protein belongs to the endoribonuclease YbeY family. The cofactor is Zn(2+).

It localises to the cytoplasm. In terms of biological role, single strand-specific metallo-endoribonuclease involved in late-stage 70S ribosome quality control and in maturation of the 3' terminus of the 16S rRNA. The protein is Endoribonuclease YbeY of Vesicomyosocius okutanii subsp. Calyptogena okutanii (strain HA).